A 695-amino-acid polypeptide reads, in one-letter code: DSC E3 ubiquitin ligase complex subunit 1 (695 aa).

Residues 1–25 (MDRRRWVPSTPVVTLLLLFMLFAPA) form the signal peptide. Residues 26–319 (PRLPSRNGES…KGPRNFVLEN (294 aa)) lie on the Lumenal side of the membrane. A helical transmembrane segment spans residues 320–340 (HLVRFSSLYIFIVLSQIFVLL). The Cytoplasmic portion of the chain corresponds to 341 to 353 (RQMRINSPSHVQR). Residues 354–374 (LSFLTIAMQAGLDAYIAIFFL) form a helical membrane-spanning segment. Over 375-382 (STNAVIEK) the chain is Lumenal. Residues 383–403 (GYLPFVSVAFLSLVPSVMFTM) form a helical membrane-spanning segment. The Cytoplasmic portion of the chain corresponds to 404 to 486 (RYLALILRVQ…QRDWSAVCLR (83 aa)). The disordered stretch occupies residues 419 to 473 (PPAPRPVTNNSSNNNTNQSNASNENSPNAPSAANDNTETTTVNPPQEDDQPMTQH). Residues 427–454 (NNSSNNNTNQSNASNENSPNAPSAANDN) show a composition bias toward low complexity. A helical transmembrane segment spans residues 487–507 (FYFIILVVCIASLYSAFWPVI). Over 508-509 (YR) the chain is Lumenal. Residues 510-530 (FYFISALIFTSYSFWIPQIIQ) form a helical membrane-spanning segment. The Cytoplasmic portion of the chain corresponds to 531-540 (NVKQGTSRSF). Residues 541 to 561 (TWTYILGASVLRLYLPLAIFI) traverse the membrane as a helical segment. The Lumenal segment spans residues 562 to 572 (DSELILGFPPK). Residues 573-593 (YFFALGLVLWMLFQVLVLLVQ) traverse the membrane as a helical segment. Topologically, residues 594 to 695 (DTLGPRFFLP…PVCRCHLPAV (102 aa)) are cytoplasmic. The segment at 634–689 (CPICMQPIELVSTGSTLNPASMMVRRNYMLTPCHHLYHRQCLLQWMETRSICPVCR) adopts an RING-type; atypical zinc-finger fold.

As to quaternary structure, component of the DSC E3 ubiquitin ligase complex composed of dsc1, dsc2, dsc3 and dsc4.

The protein localises to the endoplasmic reticulum membrane. The protein resides in the golgi apparatus membrane. It catalyses the reaction S-ubiquitinyl-[E2 ubiquitin-conjugating enzyme]-L-cysteine + [acceptor protein]-L-lysine = [E2 ubiquitin-conjugating enzyme]-L-cysteine + N(6)-ubiquitinyl-[acceptor protein]-L-lysine.. It functions in the pathway protein modification; protein ubiquitination. Catalytic component of the DSC E3 ubiquitin ligase complex which is required for the sre1 transcriptional activator proteolytic cleavage to release the soluble transcription factor from the membrane in low oxygen or sterol conditions. The complex also plays an important role in the multivesicular body (MVB) pathway and functions in a post-endoplasmic reticulum pathway for protein degradation. The sequence is that of DSC E3 ubiquitin ligase complex subunit 1 (dsc1) from Schizosaccharomyces pombe (strain 972 / ATCC 24843) (Fission yeast).